Reading from the N-terminus, the 341-residue chain is Glucokinase (341 aa).

18-23 (GDIGGT) contacts ATP.

The protein belongs to the bacterial glucokinase family.

It localises to the cytoplasm. It catalyses the reaction D-glucose + ATP = D-glucose 6-phosphate + ADP + H(+). The polypeptide is Glucokinase (Rhizobium etli (strain ATCC 51251 / DSM 11541 / JCM 21823 / NBRC 15573 / CFN 42)).